Reading from the N-terminus, the 89-residue chain is Small ribosomal subunit protein uS15 (89 aa).

Positions 1–21 (MAITQERKNQLINEFKTHESD) are enriched in basic and acidic residues. A disordered region spans residues 1–24 (MAITQERKNQLINEFKTHESDTGS).

The protein belongs to the universal ribosomal protein uS15 family. In terms of assembly, part of the 30S ribosomal subunit. Forms a bridge to the 50S subunit in the 70S ribosome, contacting the 23S rRNA.

In terms of biological role, one of the primary rRNA binding proteins, it binds directly to 16S rRNA where it helps nucleate assembly of the platform of the 30S subunit by binding and bridging several RNA helices of the 16S rRNA. Its function is as follows. Forms an intersubunit bridge (bridge B4) with the 23S rRNA of the 50S subunit in the ribosome. The protein is Small ribosomal subunit protein uS15 of Bacillus subtilis (strain 168).